The chain runs to 346 residues: MLFKQQVWLRQKLLVLGSLAVGSLLYLVARVGSLDRLQPICPVESRFGGAHNQAELPLRALQFKRGLLHEFRKGNSSKEQVHLHDLVQQLPKAIIIGVRKGGTRALLEMLNLHPAVVKASQEIHFFDNDENYAKGIEWYRKKMPFSYPQQITIEKSPAYFITEEVPERIYKMNSSIKLLIIVREPTTRAISDYTQVLEGKERKNKTYYKFEKLAIDPNTCEVNTKYKAVRTSIYTKHLERWLKYFPIEQFHIVDGDRLITEPLPELQLVEKFLNLPPRISQYNLYFNATRGFYCLRFNIIFNKCLAGSKGRIHPEVDPSVITKLRKFFHPFNQKFYQITGRTLNWP.

Over 1 to 12 (MLFKQQVWLRQK) the chain is Cytoplasmic. A helical; Signal-anchor for type II membrane protein membrane pass occupies residues 13-32 (LLVLGSLAVGSLLYLVARVG). Residues 33 to 346 (SLDRLQPICP…QITGRTLNWP (314 aa)) are Lumenal-facing. Residue Asn-75 is glycosylated (N-linked (GlcNAc...) asparagine). 3'-phosphoadenylyl sulfate is bound at residue 100–104 (KGGTR). Substrate is bound by residues 122–128 (EIHFFDN) and 155–158 (KSPA). Asn-173 carries an N-linked (GlcNAc...) asparagine glycan. Residues Arg-183 and Ser-191 each coordinate 3'-phosphoadenylyl sulfate. A glycan (N-linked (GlcNAc...) asparagine) is linked at Asn-204. Position 226–227 (226–227 (YK)) interacts with substrate. The N-linked (GlcNAc...) asparagine glycan is linked to Asn-287. Tyr-293 is a 3'-phosphoadenylyl sulfate binding site. A disulfide bond links Cys-294 and Cys-304. A 3'-phosphoadenylyl sulfate-binding site is contributed by 309-313 (KGRIH).

The protein belongs to the sulfotransferase 1 family.

It localises to the golgi apparatus membrane. The enzyme catalyses alpha-D-glucosaminyl-[heparan sulfate](n) + 3'-phosphoadenylyl sulfate = 3-sulfo-alpha-D-glucosaminyl-[heparan sulfate](n) + adenosine 3',5'-bisphosphate + H(+). Functionally, sulfotransferase that utilizes 3'-phospho-5'-adenylyl sulfate (PAPS) to catalyze the transfer of a sulfo group to position 3 of glucosamine residues in heparan. Catalyzes the rate limiting step in the biosynthesis of heparan sulfate (HSact). This modification is a crucial step in the biosynthesis of anticoagulant heparan sulfate as it completes the structure of the antithrombin pentasaccharide binding site. Also generates GlcUA-GlcNS or IdoUA-GlcNS and IdoUA2S-GlcNH2. This is Heparan sulfate glucosamine 3-O-sulfotransferase 5 (Hs3st5) from Mus musculus (Mouse).